The sequence spans 241 residues: Caffeoyl-CoA O-methyltransferase (241 aa).

Lysine 14 provides a ligand contact to substrate. S-adenosyl-L-methionine-binding positions include threonine 58, glutamate 80, 82 to 83, serine 88, aspartate 106, and alanine 135; that span reads GV. Aspartate 158 provides a ligand contact to substrate. Residue aspartate 158 participates in a divalent metal cation binding. Position 160 (aspartate 160) interacts with S-adenosyl-L-methionine. Positions 184 and 185 each coordinate a divalent metal cation.

It belongs to the class I-like SAM-binding methyltransferase superfamily. Cation-dependent O-methyltransferase family. CCoAMT subfamily. A divalent metal cation serves as cofactor.

The catalysed reaction is (E)-caffeoyl-CoA + S-adenosyl-L-methionine = (E)-feruloyl-CoA + S-adenosyl-L-homocysteine + H(+). The protein operates within aromatic compound metabolism; phenylpropanoid biosynthesis. In terms of biological role, methylates caffeoyl-CoA to feruloyl-CoA and 5-hydroxyferuloyl-CoA to sinapoyl-CoA. Plays a role in the synthesis of feruloylated polysaccharides. Involved in the reinforcement of the plant cell wall. Also involved in the responding to wounding or pathogen challenge by the increased formation of cell wall-bound ferulic acid polymers. This chain is Caffeoyl-CoA O-methyltransferase, found in Stellaria longipes (Longstalk starwort).